The following is a 2217-amino-acid chain: Protein irg-7 (2217 aa).

The signal sequence occupies residues 1 to 16 (MRNWVLIAALAVICLA). EGF-like domains are found at residues 370–405 (SGST…FHCQ) and 864–896 (TGTY…ESCE). Disulfide bonds link Cys379/Cys393, Cys395/Cys404, Cys868/Cys873, Cys886/Cys895, Cys1212/Cys1312, Cys1285/Cys1304, Cys1508/Cys1521, and Cys1523/Cys1532. The C-type lectin domain occupies 1188–1313 (IGQYCIKFMA…CAEPRAFACQ (126 aa)). The EGF-like 3 domain occupies 1499–1533 (TGSRCTVPICVNGGTRNPDEATCSCPDGYEGPNCQ). In terms of domain architecture, VWFA spans 2016–2202 (DVVFMIDGSQ…NNQIKTIQQL (187 aa)).

It localises to the secreted. Its function is as follows. Plays a role in innate immunity, probably via the atf-7 pathway, to confer resistance to pathogenic bacteria. May also play a role in the regulation of longevity. The sequence is that of Protein irg-7 from Caenorhabditis elegans.